Reading from the N-terminus, the 470-residue chain is Poly(A) polymerase catalytic subunit (470 aa).

Residues D192 and D194 contribute to the active site.

Belongs to the poxviridae poly(A) polymerase catalytic subunit family. As to quaternary structure, heterodimer of a large (catalytic) subunit and a small (regulatory) subunit.

It carries out the reaction RNA(n) + ATP = RNA(n)-3'-adenine ribonucleotide + diphosphate. Polymerase that creates the 3'-poly(A) tail of mRNA's. The protein is Poly(A) polymerase catalytic subunit (PAPL) of Sus scrofa (Pig).